The primary structure comprises 1414 residues: DNA-directed RNA polymerase subunit beta' (1414 aa).

Zn(2+) is bound by residues Cys70, Cys72, Cys85, and Cys88. 3 residues coordinate Mg(2+): Asp460, Asp462, and Asp464. Zn(2+) is bound by residues Cys814, Cys888, Cys895, and Cys898. Residues 1392-1403 are compositionally biased toward low complexity; the sequence is EQALSEALKSSA. A disordered region spans residues 1392-1414; it reads EQALSEALKSSAPQEAKAAQKDE.

This sequence belongs to the RNA polymerase beta' chain family. In terms of assembly, the RNAP catalytic core consists of 2 alpha, 1 beta, 1 beta' and 1 omega subunit. When a sigma factor is associated with the core the holoenzyme is formed, which can initiate transcription. It depends on Mg(2+) as a cofactor. Zn(2+) is required as a cofactor.

The enzyme catalyses RNA(n) + a ribonucleoside 5'-triphosphate = RNA(n+1) + diphosphate. In terms of biological role, DNA-dependent RNA polymerase catalyzes the transcription of DNA into RNA using the four ribonucleoside triphosphates as substrates. The sequence is that of DNA-directed RNA polymerase subunit beta' from Coxiella burnetii (strain RSA 331 / Henzerling II).